The primary structure comprises 183 residues: Transcription factor 15 (183 aa).

The disordered stretch occupies residues Asp24–Ala46. Positions Lys61 to Leu113 constitute a bHLH domain.

In terms of assembly, heterodimer; efficient DNA binding requires dimerization with another bHLH protein.

It localises to the nucleus. Its function is as follows. Early transcription factor that plays a key role in somitogenesis, paraxial mesoderm development and regulation of stem cell pluripotency. Essential for the mesenchymal to epithelial transition associated with somite formation. Required for somite morphogenesis, thereby regulating patterning of the axial skeleton and skeletal muscles. Also plays a key role in regulation of stem cell pluripotency. Promotes pluripotency exit of embryonic stem cells (ESCs) by priming ESCs for differentiation. Acts as a key regulator of self-renewal of hematopoietic stem cells (HSCs) by mediating HSCs quiescence and long-term self-renewal. Acts by forming a heterodimer with another helix-loop-helix (bHLH) protein, that binds DNA on E-box motifs (5'-CANNTG-3') and activates transcription of target genes. The polypeptide is Transcription factor 15 (TCF15) (Gallus gallus (Chicken)).